Here is a 295-residue protein sequence, read N- to C-terminus: Glycine N-acyltransferase-like protein Keg1 (295 aa).

Lysine 41 is subject to N6-acetyllysine; alternate. At lysine 41 the chain carries N6-succinyllysine; alternate. Lysine 43 carries the post-translational modification N6-acetyllysine. Lysine 48 is modified (N6-acetyllysine; alternate). An N6-succinyllysine; alternate modification is found at lysine 48. Lysine 80 and lysine 83 each carry N6-acetyllysine. 3 positions are modified to N6-acetyllysine; alternate: lysine 124, lysine 128, and lysine 140. N6-succinyllysine; alternate is present on residues lysine 124, lysine 128, and lysine 140. Lysine 150 carries the N6-acetyllysine modification. Residue lysine 255 is modified to N6-acetyllysine; alternate. Lysine 255 carries the N6-succinyllysine; alternate modification.

The protein belongs to the glycine N-acyltransferase family. As to quaternary structure, binds to microtubules.

It is found in the cytoplasm. The protein localises to the cytoskeleton. The protein resides in the microtubule organizing center. It localises to the centrosome. It catalyses the reaction an acyl-CoA + glycine = an N-acylglycine + CoA + H(+). Acyltransferase which transfers the acyl group to the N-terminus of glycine. Can conjugate a multitude of substrates to form a variety of N-acylglycines. The polypeptide is Glycine N-acyltransferase-like protein Keg1 (Keg1) (Mus musculus (Mouse)).